A 257-amino-acid chain; its full sequence is 4-diphosphocytidyl-2-C-methyl-D-erythritol kinase (257 aa).

K8 is an active-site residue. Position 91-101 (91-101) interacts with ATP; sequence PMGGGLGGGSA. Residue D131 is part of the active site.

This sequence belongs to the GHMP kinase family. IspE subfamily.

The enzyme catalyses 4-CDP-2-C-methyl-D-erythritol + ATP = 4-CDP-2-C-methyl-D-erythritol 2-phosphate + ADP + H(+). It functions in the pathway isoprenoid biosynthesis; isopentenyl diphosphate biosynthesis via DXP pathway; isopentenyl diphosphate from 1-deoxy-D-xylulose 5-phosphate: step 3/6. In terms of biological role, catalyzes the phosphorylation of the position 2 hydroxy group of 4-diphosphocytidyl-2C-methyl-D-erythritol. The chain is 4-diphosphocytidyl-2-C-methyl-D-erythritol kinase from Petrotoga mobilis (strain DSM 10674 / SJ95).